The following is a 629-amino-acid chain: Hemocyanin C chain (629 aa).

Positions 175, 179, 206, 326, 330, and 366 each coordinate Cu cation. Asn-451 carries N-linked (GlcNAc...) asparagine glycosylation. Residues Cys-537 and Cys-585 are joined by a disulfide bond. The N-linked (GlcNAc...) asparagine glycan is linked to Asn-618.

It belongs to the tyrosinase family. Hemocyanin subfamily. Tarantula hemocyanin is a 24-chain polymer with seven different chains identified. Hemolymph.

The protein resides in the secreted. It localises to the extracellular space. Hemocyanins are copper-containing oxygen carriers occurring freely dissolved in the hemolymph of many mollusks and arthropods. The polypeptide is Hemocyanin C chain (HCC) (Aphonopelma sp. (American tarantula)).